Reading from the N-terminus, the 345-residue chain is MLALRKTLLHGRLPAAPPAAAAAAIASRIPALLRRLSSSPGDGQGGDEWGSSWSTGITKEHFDGSDAAVGRPVTSPSKPVSPELAAVRAMDEEDEIFRAMERDNREAKAYVDSWGDRMRETCELLKQVREPGSRGSYLKDSEKQEMYRLHKEDPETYTVERLAKDFRVMRQRVHAILWLKEMEEEEERKLGKPLDDSVEVLLDSCPEFFNSHDREFHVASLPYKPDFKVMPEGWDGTTRDPDEVLYEISMKEDQMLYEEFVQRLQFNKKKVAGEVKCHKYSRRRPDDGWTYMVEKLGVQSKRGSGGGWKFASLPDGSSRPLNDMEKMYVKRETPKRRRRIMAPFK.

Residues 1-43 (MLALRKTLLHGRLPAAPPAAAAAAIASRIPALLRRLSSSPGDG) constitute a mitochondrion transit peptide. The interval 36-82 (LSSSPGDGQGGDEWGSSWSTGITKEHFDGSDAAVGRPVTSPSKPVSP) is disordered.

It localises to the mitochondrion. Its function is as follows. Essential for fertility (male and female gametophyte functions and development). Required for the integrity of female gametic mitochondria. Involved in embryo apical-basal patterning, and particularly dorsal-ventral patterning, during early embryogenesis, and endosperm free nucleus positioning and development as well as early endosperm development, probably by modulating the expression pattern of related genes (e.g. AL1, MYB3/AL2, CYP78A13/GE, PNH1, HAZ1, MPK6 and OSH1). Has function in triggering of endosperm programmed cell death (PCD) leading to syncytial endosperm cellularization and starchy endosperm cell maturation. Implicated in central vacuole dynamics necessary for microspore development leading to pollen production, and for pollen development and germination. The chain is Protein GAMETE CELL DEFECTIVE 1, mitochondrial from Oryza sativa subsp. indica (Rice).